We begin with the raw amino-acid sequence, 66 residues long: Large ribosomal subunit protein uL29 (66 aa).

It belongs to the universal ribosomal protein uL29 family.

The protein is Large ribosomal subunit protein uL29 of Bacillus mycoides (strain KBAB4) (Bacillus weihenstephanensis).